We begin with the raw amino-acid sequence, 548 residues long: Non-structural protein NS1 (548 aa).

Belongs to the orbivirus non-structural protein NS1 family.

The polypeptide is Non-structural protein NS1 (Segment-5) (Camelus dromedarius (Dromedary)).